A 302-amino-acid chain; its full sequence is Protein TILLER ANGLE CONTROL 1 (302 aa).

The IGT motif motif lies at 57–63 (GILTIGT). Disordered stretches follow at residues 82-115 (ESEEDDQESHGFSHSGNDDDDDDDEHYDHSVEDE) and 159-180 (EGSSEISTKPDQSANDQSKNKK). A compositionally biased stretch (acidic residues) spans 99-115 (DDDDDDDEHYDHSVEDE). Positions 162–175 (SEISTKPDQSANDQ) are enriched in polar residues.

This sequence belongs to the TAC family. As to expression, highly expressed in flower buds. Expressed in branch attachment sites, vegetative buds and young fruits.

Its function is as follows. Involved in the regulation of axillary shoot growth angle. Promotes horizontal shoot growth. The polypeptide is Protein TILLER ANGLE CONTROL 1 (Prunus persica (Peach)).